The following is a 263-amino-acid chain: Ret finger protein-like 4B (263 aa).

The segment at 11–53 adopts an RING-type zinc-finger fold; it reads CPVCLDFFSCSISLSCTHVFCFDCIQRYILENHDFRAMCPLCR. A B30.2/SPRY domain is found at 76-263; it reads HNSRLEQSLH…ESGNVLTICP (188 aa).

This is Ret finger protein-like 4B (RFPL4B) from Homo sapiens (Human).